Reading from the N-terminus, the 231-residue chain is Lipoprotein-releasing system ATP-binding protein LolD 2 (231 aa).

An ABC transporter domain is found at 6–230 (VEARSLSKSF…DGRLVGQDPA (225 aa)). 42–49 (GPSGSGKS) provides a ligand contact to ATP.

The protein belongs to the ABC transporter superfamily. Lipoprotein translocase (TC 3.A.1.125) family. In terms of assembly, the complex is composed of two ATP-binding proteins (LolD) and two transmembrane proteins (LolC and LolE).

It localises to the cell inner membrane. In terms of biological role, part of the ABC transporter complex LolCDE involved in the translocation of mature outer membrane-directed lipoproteins, from the inner membrane to the periplasmic chaperone, LolA. Responsible for the formation of the LolA-lipoprotein complex in an ATP-dependent manner. The polypeptide is Lipoprotein-releasing system ATP-binding protein LolD 2 (Rhodospirillum rubrum (strain ATCC 11170 / ATH 1.1.1 / DSM 467 / LMG 4362 / NCIMB 8255 / S1)).